We begin with the raw amino-acid sequence, 348 residues long: Fructose-1,6-bisphosphatase (348 aa).

A Pro/N-degron motif is present at residues 2–5 (PTLV). The residue at position 12 (Ser-12) is a Phosphoserine. AMP contacts are provided by residues 27 to 31 (IIEHQ) and 38 to 42 (TGDFT). Mg(2+) contacts are provided by Asp-79 and Glu-108. Position 122–123 (122–123 (SY)) interacts with AMP. Residues Asp-128, Ile-130, and Asp-131 each coordinate Mg(2+). 131-134 (DGSS) serves as a coordination point for substrate. Residue Arg-150 coordinates AMP. Residues 222-225 (NEGN), 255-260 (RYVGSM), Tyr-276, and 286-288 (KLR) contribute to the substrate site. Glu-292 serves as a coordination point for Mg(2+).

Belongs to the FBPase class 1 family. In terms of assembly, homotetramer. Mg(2+) is required as a cofactor. Ubiquitinated. Targeted for proteasomal degradation when cells are shifted to glucose-containing growth medium.

The catalysed reaction is beta-D-fructose 1,6-bisphosphate + H2O = beta-D-fructose 6-phosphate + phosphate. It participates in carbohydrate biosynthesis; gluconeogenesis. Its activity is regulated as follows. Subject to complex allosteric regulation. The enzyme can assume an active R-state, or an inactive T-state. Intermediate conformations may exist. AMP acts as allosteric inhibitor. AMP binding affects the turnover of bound substrate and not the affinity for substrate. The protein is Fructose-1,6-bisphosphatase (FBP1) of Saccharomyces cerevisiae (strain ATCC 204508 / S288c) (Baker's yeast).